Here is a 560-residue protein sequence, read N- to C-terminus: Dihydroxy-acid dehydratase (560 aa).

Cys52 lines the [2Fe-2S] cluster pocket. Asp84 contributes to the Mg(2+) binding site. Position 125 (Cys125) interacts with [2Fe-2S] cluster. Mg(2+)-binding residues include Asp126 and Lys127. N6-carboxylysine is present on Lys127. Cys197 serves as a coordination point for [2Fe-2S] cluster. Glu449 is a Mg(2+) binding site. The active-site Proton acceptor is Ser475.

It belongs to the IlvD/Edd family. Homodimer. The cofactor is [2Fe-2S] cluster. Mg(2+) is required as a cofactor.

It carries out the reaction (2R)-2,3-dihydroxy-3-methylbutanoate = 3-methyl-2-oxobutanoate + H2O. The enzyme catalyses (2R,3R)-2,3-dihydroxy-3-methylpentanoate = (S)-3-methyl-2-oxopentanoate + H2O. It functions in the pathway amino-acid biosynthesis; L-isoleucine biosynthesis; L-isoleucine from 2-oxobutanoate: step 3/4. The protein operates within amino-acid biosynthesis; L-valine biosynthesis; L-valine from pyruvate: step 3/4. Its function is as follows. Functions in the biosynthesis of branched-chain amino acids. Catalyzes the dehydration of (2R,3R)-2,3-dihydroxy-3-methylpentanoate (2,3-dihydroxy-3-methylvalerate) into 2-oxo-3-methylpentanoate (2-oxo-3-methylvalerate) and of (2R)-2,3-dihydroxy-3-methylbutanoate (2,3-dihydroxyisovalerate) into 2-oxo-3-methylbutanoate (2-oxoisovalerate), the penultimate precursor to L-isoleucine and L-valine, respectively. In Sulfurisphaera tokodaii (strain DSM 16993 / JCM 10545 / NBRC 100140 / 7) (Sulfolobus tokodaii), this protein is Dihydroxy-acid dehydratase.